We begin with the raw amino-acid sequence, 398 residues long: Acetyl-CoA acetyltransferase (398 aa).

N-acetylserine is present on S2. C91 serves as the catalytic Acyl-thioester intermediate. The CoA site is built by Y186 and K231. A K(+)-binding site is contributed by Y186. Residues A248, A249, and A251 each coordinate K(+). A CoA-binding site is contributed by S252. V350 serves as a coordination point for K(+). Catalysis depends on proton acceptor residues H354 and C384.

Belongs to the thiolase-like superfamily. Thiolase family. In terms of assembly, homotetramer.

The protein resides in the cytoplasm. It carries out the reaction 2 acetyl-CoA = acetoacetyl-CoA + CoA. It functions in the pathway metabolic intermediate biosynthesis; (R)-mevalonate biosynthesis; (R)-mevalonate from acetyl-CoA: step 1/3. Functionally, acetyl-CoA acetyltransferase; part of the first module of ergosterol biosynthesis pathway that includes the early steps of the pathway, conserved across all eukaryotes, and which results in the formation of mevalonate from acetyl-coenzyme A (acetyl-CoA). In this module, the acetyl-CoA acetyltransferase ERG10 catalyzes the formation of acetoacetyl-CoA. The hydroxymethylglutaryl-CoA synthase ERG13 then condenses acetyl-CoA with acetoacetyl-CoA to form HMG-CoA. The rate-limiting step of the early module is the reduction to mevalonate by the 3-hydroxy-3-methylglutaryl-coenzyme A (HMG-CoA) reductases HMG1 and HMG2 which are derived from a single ancestral HMGR gene by gene duplication. The chain is Acetyl-CoA acetyltransferase from Saccharomyces pastorianus (strain ATCC 76670 / Carlsberg bottom yeast no.2 / CBS 1503 / CLIB 180 / NBRC 10610 / NRRL Y-1525) (Saaz-type lager yeast).